Reading from the N-terminus, the 155-residue chain is Ribonuclease H (155 aa).

Residues M1–K146 enclose the RNase H type-1 domain. The Mg(2+) site is built by D9, E52, D74, and D138.

Belongs to the RNase H family. In terms of assembly, monomer. Requires Mg(2+) as cofactor.

It is found in the cytoplasm. It catalyses the reaction Endonucleolytic cleavage to 5'-phosphomonoester.. Its function is as follows. Endonuclease that specifically degrades the RNA of RNA-DNA hybrids. In Ruegeria pomeroyi (strain ATCC 700808 / DSM 15171 / DSS-3) (Silicibacter pomeroyi), this protein is Ribonuclease H.